A 401-amino-acid chain; its full sequence is Sodium/glutamate symporter (401 aa).

The Periplasmic segment spans residues 1-6 (MFHLDT). A helical membrane pass occupies residues 7–24 (LATLVAATLTLLLGRKLV). Topologically, residues 25-32 (HSVSFLKK) are cytoplasmic. The chain crosses the membrane as a helical span at residues 33–52 (YTIPEPVAGGLLVALALLVL). Over 53–69 (KKSMGWEVNFDMSLRDP) the chain is Periplasmic. The helical transmembrane segment at 70-87 (LMLAFFATIGLNANIASL) threads the bilayer. Over 88 to 93 (RAGGRV) the chain is Cytoplasmic. The helical transmembrane segment at 94–116 (VGIFLIVVVGLLVMQNAIGIGMA) threads the bilayer. The Periplasmic segment spans residues 117–156 (SLLGLDPLMGLLAGSITLSGGHGTGAAWSKLFIERYGFTN). A helical transmembrane segment spans residues 157–179 (ATEVAMACATFGLVLGGLIGGPV). Residues 180–212 (ARYLVKHSTTPNGIPDDQEVPTAFEKPDVGRMI) lie on the Cytoplasmic side of the membrane. A helical membrane pass occupies residues 213–235 (TSLVLIETIALIAICLTVGKIVA). Over 236 to 244 (QLLAGTAFE) the chain is Periplasmic. Residues 245–267 (LPTFVCVLFVGVILSNGLSIMGF) form a helical membrane-spanning segment. Over 268–276 (YRVFERAVS) the chain is Cytoplasmic. A helical transmembrane segment spans residues 277–292 (VLGNVSLSLFLAMALM). Residues 293–301 (GLKLWELAS) lie on the Periplasmic side of the membrane. The chain crosses the membrane as a helical span at residues 302–324 (LALPMLAILVVQTIFMALYAIFV). At 325-367 (TWRMMGKNYDAAVLAAGHCGFGLGATPTAIANMQAITERFGPS) the chain is on the cytoplasmic side. The chain crosses the membrane as a helical span at residues 368–390 (HMAFLVVPMVGAFFIDIVNALVI). Residues 391 to 401 (KLYLMLPIFAG) are Periplasmic-facing.

Belongs to the glutamate:Na(+) symporter (ESS) (TC 2.A.27) family.

It localises to the cell inner membrane. Inhibited by the uncoupler carbonylcyanide m-chlorophenylhydrazone (CCCP) and the ionophore monensin. Its function is as follows. Catalyzes the sodium-dependent, binding-protein-independent transport of glutamate. The protein is Sodium/glutamate symporter of Escherichia coli (strain K12).